A 309-amino-acid polypeptide reads, in one-letter code: Methionyl-tRNA formyltransferase (309 aa).

109 to 112 contributes to the (6S)-5,6,7,8-tetrahydrofolate binding site; it reads SLLP.

The protein belongs to the Fmt family.

It carries out the reaction L-methionyl-tRNA(fMet) + (6R)-10-formyltetrahydrofolate = N-formyl-L-methionyl-tRNA(fMet) + (6S)-5,6,7,8-tetrahydrofolate + H(+). Functionally, attaches a formyl group to the free amino group of methionyl-tRNA(fMet). The formyl group appears to play a dual role in the initiator identity of N-formylmethionyl-tRNA by promoting its recognition by IF2 and preventing the misappropriation of this tRNA by the elongation apparatus. The polypeptide is Methionyl-tRNA formyltransferase (Clostridium botulinum (strain Alaska E43 / Type E3)).